The primary structure comprises 1613 residues: Reverse gyrase (1613 aa).

The RG N-terminal-type zinc finger occupies 1-38; it reads MIPMIYKEMCPNCNGEITSERLAIGVCEKCLKEENVFE. The Zn(2+) site is built by Cys-10, Cys-13, Cys-27, and Cys-30. ATP-binding positions include Gln-83 and 100 to 107; that span reads VPTGVGKS. The 205-residue stretch at 87-291 folds into the Helicase ATP-binding domain; the sequence is AKRVLKNKSF…LYRELLDFEI (205 aa). A DEAD box motif is present at residues 203–206; it reads DDVD. Residues 310-525 form the Helicase C-terminal domain; sequence SKEKILEYIK…IDEVNLEELI (216 aa). The tract at residues 546-1613 is topoisomerase I; the sequence is DLLKSVLMVV…ALHEEILSIR (1068 aa). The 163-residue stretch at 550-712 folds into the Toprim domain; the sequence is SVLMVVESPN…NIYRVGFNEI (163 aa). Residues Glu-556 and Asp-681 each contribute to the Mg(2+) site. The Topo IA-type catalytic domain occupies 733-1613; the sequence is DENKVKGQVV…ALHEEILSIR (881 aa). In terms of domain architecture, DOD-type homing endonuclease spans 1070 to 1199; that stretch reads FAGLVLGDGS…IGIYLNSIGI (130 aa). Residue Tyr-1363 is the O-(5'-phospho-DNA)-tyrosine intermediate of the active site.

This sequence in the N-terminal section; belongs to the DEAD box helicase family. DDVD subfamily. In the C-terminal section; belongs to the type IA topoisomerase family. As to quaternary structure, monomer. Zn(2+) serves as cofactor. Mg(2+) is required as a cofactor. This protein undergoes a protein self splicing that involves a post-translational excision of the intervening region (intein) followed by peptide ligation.

The protein localises to the cytoplasm. It carries out the reaction ATP + H2O = ADP + phosphate + H(+). Its function is as follows. Modifies the topological state of DNA by introducing positive supercoils in an ATP-dependent process, increasing the linking number in steps of +1. Binds to single-stranded DNA, transiently cleaves and then rejoins the ends, introducing a positive supercoil in the process. The scissile phosphodiester is attacked by the catalytic tyrosine of the enzyme, resulting in the formation of a DNA-(5'-phosphotyrosyl)-enzyme intermediate. Probably involved in rewinding DNA strands in regions of the chromosome that have opened up to allow replication, transcription, DNA repair and/or for DNA protection. The protein is Reverse gyrase of Methanocaldococcus jannaschii (strain ATCC 43067 / DSM 2661 / JAL-1 / JCM 10045 / NBRC 100440) (Methanococcus jannaschii).